The chain runs to 84 residues: MISSQAFVAGMCAIGAGLASIACIGGGIGTGNATAKAVEGVSRQPEASGKILSTMIIGSALSEATAIYGFLIAILLVLKIGNIG.

Transmembrane regions (helical) follow at residues valine 8–isoleucine 28 and isoleucine 56–leucine 76.

This sequence belongs to the ATPase C chain family. In terms of assembly, F-type ATPases have 2 components, F(1) - the catalytic core - and F(0) - the membrane proton channel. F(1) has five subunits: alpha(3), beta(3), gamma(1), delta(1), epsilon(1). F(0) has three main subunits: a(1), b(2) and c(10-14). The alpha and beta chains form an alternating ring which encloses part of the gamma chain. F(1) is attached to F(0) by a central stalk formed by the gamma and epsilon chains, while a peripheral stalk is formed by the delta and b chains.

It is found in the cell membrane. Functionally, f(1)F(0) ATP synthase produces ATP from ADP in the presence of a proton or sodium gradient. F-type ATPases consist of two structural domains, F(1) containing the extramembraneous catalytic core and F(0) containing the membrane proton channel, linked together by a central stalk and a peripheral stalk. During catalysis, ATP synthesis in the catalytic domain of F(1) is coupled via a rotary mechanism of the central stalk subunits to proton translocation. Its function is as follows. Key component of the F(0) channel; it plays a direct role in translocation across the membrane. A homomeric c-ring of between 10-14 subunits forms the central stalk rotor element with the F(1) delta and epsilon subunits. The chain is ATP synthase subunit c from Clostridium novyi (strain NT).